We begin with the raw amino-acid sequence, 423 residues long: Pre-mRNA polyadenylation factor fip-1 (423 aa).

Acidic residues predominate over residues 1 to 11 (MDIDEDEDFYA). 3 disordered regions span residues 1–178 (MDID…PVRT), 278–307 (GPGGPGVGPAGPGAMGPGGPAGAGGMGGPG), and 360–423 (PGGG…GRRW). Positions 19–61 (PPTTAATTTTPATTTTTAAPTTTTTTTSTTTASAPPTTTSSST) are enriched in low complexity. Residues 65 to 90 (DELEEGEEEDEGGGAMDEDDDSDIDI) are compositionally biased toward acidic residues. Over residues 135 to 146 (GTNSNSNSSSNK) the composition is skewed to low complexity. Over residues 360 to 415 (PGGGPGGPGTGGMGPGGPGGQGGQGQQFGGGFGGNQGQGGYGGYDQMGGAGGGGRG) the composition is skewed to gly residues.

This sequence belongs to the FIP1 family.

Its subcellular location is the nucleus. Pre-mRNA polyadenylation factor that directly interacts with poly(A) polymerase. The protein is Pre-mRNA polyadenylation factor fip-1 (fip-1) of Neurospora crassa (strain ATCC 24698 / 74-OR23-1A / CBS 708.71 / DSM 1257 / FGSC 987).